The following is a 366-amino-acid chain: Fructose-bisphosphate aldolase 2 (366 aa).

Substrate is bound by residues arginine 60 and lysine 150. Catalysis depends on glutamate 191, which acts as the Proton acceptor. Catalysis depends on lysine 233, which acts as the Schiff-base intermediate with dihydroxyacetone-P.

It belongs to the class I fructose-bisphosphate aldolase family.

The enzyme catalyses beta-D-fructose 1,6-bisphosphate = D-glyceraldehyde 3-phosphate + dihydroxyacetone phosphate. It functions in the pathway carbohydrate degradation; glycolysis; D-glyceraldehyde 3-phosphate and glycerone phosphate from D-glucose: step 4/4. The sequence is that of Fructose-bisphosphate aldolase 2 (aldo-2) from Caenorhabditis elegans.